The primary structure comprises 92 residues: MGGLKRMYVIVYGIVQGVGYRRFIQIHAARLGIKGYAKNLPDGSVEILAEGYEEALYKLLDQIKRGPPLSKVEKVDVKFDDYTGEFASFDTY.

In terms of domain architecture, Acylphosphatase-like spans 6 to 92 (RMYVIVYGIV…TGEFASFDTY (87 aa)). Catalysis depends on residues Arg-21 and Asn-39.

Belongs to the acylphosphatase family.

The catalysed reaction is an acyl phosphate + H2O = a carboxylate + phosphate + H(+). The chain is Acylphosphatase (acyP) from Sulfolobus acidocaldarius (strain ATCC 33909 / DSM 639 / JCM 8929 / NBRC 15157 / NCIMB 11770).